A 359-amino-acid chain; its full sequence is Peptide chain release factor 1 (359 aa).

Gln-236 is subject to N5-methylglutamine.

Belongs to the prokaryotic/mitochondrial release factor family. Methylated by PrmC. Methylation increases the termination efficiency of RF1.

The protein localises to the cytoplasm. Functionally, peptide chain release factor 1 directs the termination of translation in response to the peptide chain termination codons UAG and UAA. The polypeptide is Peptide chain release factor 1 (Lacticaseibacillus casei (strain BL23) (Lactobacillus casei)).